Reading from the N-terminus, the 425-residue chain is MIAEIICVGTELLLGDILNSNAQFLAKQLANLGIAHYYQTVVGDNPDRIKQVLAIATDRSQILIFTGGLGPTPDDLTVATIADFFETPLIERPEIIEDITKKFARRGRIMTASNRKQALIPQGANILPNPIGTAPGIIWQPVQNITIMTFPGVPTEMKSMWQETAIPYMQSQGWCEQTIYSRTLKFWGITESSLAEKVAPFLEKENPTVAPYANYGEVKLRISARATSLELANKLIIPVEEEIKDIAGIDFYGINDESLASVVGKLLLESGETLAVAESCTGGSLGSMLTSIPGSSEYFYGGVISYENQVKITLLDVNLEDLMAEGSVSHVVAKQMASGVVKKLGTNWGISITGIAGPGGGSDTKPVGLVYIGIARYDDIVESFEYRFSNLRDRNWIRRVSVSTALDLLRRKLYLSKQRPQHHQA.

This sequence belongs to the CinA family.

This is CinA-like protein from Trichodesmium erythraeum (strain IMS101).